The primary structure comprises 365 residues: Chorismate synthase (365 aa).

Arg-48 is an NADP(+) binding site. Residues 130–132 (RSS), 242–243 (NA), Gly-290, 305–309 (KPTSS), and Arg-331 contribute to the FMN site.

It belongs to the chorismate synthase family. Homotetramer. FMNH2 serves as cofactor.

It carries out the reaction 5-O-(1-carboxyvinyl)-3-phosphoshikimate = chorismate + phosphate. It functions in the pathway metabolic intermediate biosynthesis; chorismate biosynthesis; chorismate from D-erythrose 4-phosphate and phosphoenolpyruvate: step 7/7. Catalyzes the anti-1,4-elimination of the C-3 phosphate and the C-6 proR hydrogen from 5-enolpyruvylshikimate-3-phosphate (EPSP) to yield chorismate, which is the branch point compound that serves as the starting substrate for the three terminal pathways of aromatic amino acid biosynthesis. This reaction introduces a second double bond into the aromatic ring system. The chain is Chorismate synthase from Erythrobacter litoralis (strain HTCC2594).